The primary structure comprises 396 residues: Serine/threonine-protein kinase 32A (396 aa).

Glycine 2 is lipidated: N-myristoyl glycine. In terms of domain architecture, Protein kinase spans 23 to 281 (FEILRAIGKG…LSDVQNFPYM (259 aa)). Residues 29–37 (IGKGSFGKV) and lysine 52 each bind ATP. The active-site Proton acceptor is aspartate 146. The interval 373 to 396 (KRQPNLALEQTKDPQGEDGQNNNL) is disordered.

Belongs to the protein kinase superfamily. Ser/Thr protein kinase family. The cofactor is Mg(2+).

It localises to the cell membrane. It carries out the reaction L-seryl-[protein] + ATP = O-phospho-L-seryl-[protein] + ADP + H(+). The catalysed reaction is L-threonyl-[protein] + ATP = O-phospho-L-threonyl-[protein] + ADP + H(+). The protein is Serine/threonine-protein kinase 32A (STK32A) of Homo sapiens (Human).